We begin with the raw amino-acid sequence, 134 residues long: Protein PsiB (134 aa).

In terms of biological role, could be involved directly or indirectly in exopolysaccharide synthesis. This Rhizobium leguminosarum bv. phaseoli protein is Protein PsiB (psiB).